The following is a 535-amino-acid chain: Glucan 1,6-alpha-glucosidase (535 aa).

Asp194 acts as the Nucleophile in catalysis. Residue Glu236 is the Proton donor of the active site.

The protein belongs to the glycosyl hydrolase 13 family.

It is found in the cytoplasm. The catalysed reaction is Hydrolysis of (1-&gt;6)-alpha-D-glucosidic linkages in (1-&gt;6)-alpha-D-glucans and derived oligosaccharides.. Its function is as follows. The physiological substrates may be short isomaltosaccharides. This chain is Glucan 1,6-alpha-glucosidase (dexB), found in Streptococcus pneumoniae serotype 4 (strain ATCC BAA-334 / TIGR4).